A 341-amino-acid chain; its full sequence is HTH-type transcriptional repressor PurR (341 aa).

The HTH lacI-type domain occupies 2–56 (ATIKDVAKHAGVSTTTVSHVINKTRFVAENTKAAVWAAIKELHYSPSAVARSLKV). The H-T-H motif DNA-binding region spans 4 to 23 (IKDVAKHAGVSTTTVSHVIN). A DNA-binding region spans residues 48–56 (SAVARSLKV). Hypoxanthine-binding residues include Tyr73, Arg190, Thr192, Phe221, and Asp275.

In terms of assembly, homodimer.

The protein operates within purine metabolism; purine nucleotide biosynthesis [regulation]. In terms of biological role, is the main repressor of the genes involved in the de novo synthesis of purine nucleotides, regulating purB, purC, purEK, purF, purHD, purL, purMN and guaBA expression. PurR is allosterically activated to bind its cognate DNA by binding the purine corepressors, hypoxanthine or guanine, thereby effecting transcription repression. In Yersinia enterocolitica serotype O:8 / biotype 1B (strain NCTC 13174 / 8081), this protein is HTH-type transcriptional repressor PurR.